The primary structure comprises 484 residues: Bifunctional protein HldE (484 aa).

The tract at residues 1–320 (MDFSSITVLC…AELNAQDADA (320 aa)) is ribokinase. 195–198 (NARE) lines the ATP pocket. D265 is a catalytic residue. The interval 349-484 (FTNGCFDIIH…RIRAAGAADR (136 aa)) is cytidylyltransferase.

The protein in the N-terminal section; belongs to the carbohydrate kinase PfkB family. It in the C-terminal section; belongs to the cytidylyltransferase family. As to quaternary structure, homodimer.

The enzyme catalyses D-glycero-beta-D-manno-heptose 7-phosphate + ATP = D-glycero-beta-D-manno-heptose 1,7-bisphosphate + ADP + H(+). It carries out the reaction D-glycero-beta-D-manno-heptose 1-phosphate + ATP + H(+) = ADP-D-glycero-beta-D-manno-heptose + diphosphate. Its pathway is nucleotide-sugar biosynthesis; ADP-L-glycero-beta-D-manno-heptose biosynthesis; ADP-L-glycero-beta-D-manno-heptose from D-glycero-beta-D-manno-heptose 7-phosphate: step 1/4. It participates in nucleotide-sugar biosynthesis; ADP-L-glycero-beta-D-manno-heptose biosynthesis; ADP-L-glycero-beta-D-manno-heptose from D-glycero-beta-D-manno-heptose 7-phosphate: step 3/4. Its function is as follows. Catalyzes the phosphorylation of D-glycero-D-manno-heptose 7-phosphate at the C-1 position to selectively form D-glycero-beta-D-manno-heptose-1,7-bisphosphate. In terms of biological role, catalyzes the ADP transfer from ATP to D-glycero-beta-D-manno-heptose 1-phosphate, yielding ADP-D-glycero-beta-D-manno-heptose. The sequence is that of Bifunctional protein HldE from Gluconacetobacter diazotrophicus (strain ATCC 49037 / DSM 5601 / CCUG 37298 / CIP 103539 / LMG 7603 / PAl5).